Consider the following 2944-residue polypeptide: Collagen alpha-1(VII) chain (2944 aa).

Residues 1-16 form the signal peptide; the sequence is MTLRLLVAALCAGILA. The nonhelical region (NC1) stretch occupies residues 17–1253; that stretch reads EAPRVRAQHR…PEPCPVYCPK (1237 aa). A VWFA 1 domain is found at 38–211; that stretch reads DIVFLLDGSS…SILRTLLPLV (174 aa). Fibronectin type-III domains are found at residues 234–329, 330–416, 417–507, 510–597, 600–687, 688–775, 778–866, 869–957, and 958–1051; these read APRD…TALE, GPEL…TDAS, VEQT…PELP, PVTD…EPET, AVPG…DPLG, PVRT…APEP, RVSR…PPEA, ALGT…SPRV, and PSIE…CPRG. Residue asparagine 337 is glycosylated (N-linked (GlcNAc...) asparagine). The interval 632–651 is disordered; the sequence is STGSGPESSQTLPPDSTATD. Asparagine 786 carries an N-linked (GlcNAc...) asparagine glycan. The VWFA 2 domain maps to 1054–1229; the sequence is DVVFLPHATQ…PSLDQAVSGL (176 aa). N-linked (GlcNAc...) asparagine glycosylation is present at asparagine 1109. 2 short sequence motifs (cell attachment site) span residues 1170–1172 and 1334–1336; these read RGD. Disordered stretches follow at residues 1239-1941, 1963-2782, and 2837-2872; these read TTQP…SVPN, WDES…EKGE, and SHAE…PWDS. The segment at 1254–1477 is interrupted collagenous region; it reads GQKGEPGEMG…GPRGPPGAIG (224 aa). Positions 1254 to 2784 are triple-helical region; that stretch reads GQKGEPGEMG…GPRGEKGEAA (1531 aa). Over residues 1336-1346 the composition is skewed to basic and acidic residues; that stretch reads DPGERGPRGPK. A compositionally biased stretch (gly residues) spans 1355–1365; it reads VIGGEGPGLPG. Positions 1399 to 1408 are enriched in basic and acidic residues; the sequence is KGDKGDRGER. Residues 1429–1440 show a composition bias toward pro residues; that stretch reads PGSPGPQGPVGP. Low complexity predominate over residues 1574-1583; sequence RGPPGLVLPG. Composition is skewed to basic and acidic residues over residues 1630–1642, 1669–1683, and 1715–1733; these read RGRD…KGDE, VGEK…EDGR, and AREK…RGPK. Residues 1786-1802 are compositionally biased toward low complexity; it reads KPGAAGPSGPNGAAGKA. The segment covering 1852–1877 has biased composition (basic and acidic residues); it reads EDGRKGEKGDSGASGREGRDGPKGER. The segment covering 1886-1897 has biased composition (pro residues); that stretch reads QGPPGLPGPVGP. The segment covering 1898–1911 has biased composition (gly residues); that stretch reads PGQGFPGVPGGTGP. Residues 1974-1984 show a composition bias toward basic and acidic residues; it reads PERRRGPKGDS. Residues 2008–2010 carry the Cell attachment site motif; that stretch reads RGD. A 4-hydroxyproline mark is found at proline 2036 and proline 2039. Residues 2046-2055 show a composition bias toward gly residues; sequence GRAGGVGEAG. The segment covering 2056-2074 has biased composition (basic and acidic residues); that stretch reads RPGERGERGEKGERGEQGR. Pro residues predominate over residues 2078–2092; sequence PGLPGTPGPPGPPGP. 4-hydroxyproline occurs at positions 2084, 2087, and 2090. A compositionally biased stretch (basic and acidic residues) spans 2127 to 2143; the sequence is PKGDRGVPGIKGDRGEP. A 4-hydroxyproline mark is found at proline 2167, proline 2176, proline 2185, and proline 2188. 2 stretches are compositionally biased toward low complexity: residues 2191–2206 and 2235–2250; these read PGLA…SGLK and SGLV…PGQV. Positions 2328-2346 are enriched in basic and acidic residues; that stretch reads AKGDRGLPGPRGEKGEAGR. A compositionally biased stretch (low complexity) spans 2387 to 2406; that stretch reads VKGDLGLPGLPGAPGVVGFP. Residues 2438-2448 show a composition bias toward pro residues; sequence PLGPPGPPGSV. 2 stretches are compositionally biased toward basic and acidic residues: residues 2471–2486 and 2534–2570; these read RGER…DGRP and AKGD…EPGD. Residues 2553 to 2555 carry the Cell attachment site motif; sequence RGD. A compositionally biased stretch (low complexity) spans 2573 to 2601; that stretch reads SAGLPGLRGLLGPQGQPGAAGIPGDPGSP. Residues lysine 2625 and lysine 2631 each carry the 5-hydroxylysine; alternate modification. 2 O-linked (Gal...) hydroxylysine; alternate glycosylation sites follow: lysine 2625 and lysine 2631. A 4-hydroxyproline mark is found at proline 2664, proline 2667, and proline 2673. A compositionally biased stretch (gly residues) spans 2704-2713; it reads GTPGIGGFPG. Residues 2749-2762 are compositionally biased toward low complexity; sequence GERVVGAPGVPGAP. Residues 2785–2944 form a nonhelical region (NC2) region; the sequence is LTEDDIRGFV…QSQGTGTAQD (160 aa). The span at 2837–2847 shows a compositional bias: basic and acidic residues; that stretch reads SHAEEEERVPP. The span at 2848–2872 shows a compositional bias: acidic residues; sequence EDDEYSEYSEYSVEEYQDPEAPWDS. The 73-residue stretch at 2872–2944 folds into the BPTI/Kunitz inhibitor domain; that stretch reads SDDPCSLPLD…QSQGTGTAQD (73 aa). Cystine bridges form between cysteine 2876–cysteine 2929, cysteine 2885–cysteine 2912, and cysteine 2904–cysteine 2925.

Homotrimer. Interacts with MIA3/TANGO1; facilitating its loading into transport carriers and subsequent secretion. Post-translationally, prolines at the third position of the tripeptide repeating unit (G-X-Y) are hydroxylated in some or all of the chains.

It localises to the secreted. The protein resides in the extracellular space. It is found in the extracellular matrix. The protein localises to the basement membrane. In terms of biological role, stratified squamous epithelial basement membrane protein that forms anchoring fibrils which may contribute to epithelial basement membrane organization and adherence by interacting with extracellular matrix (ECM) proteins such as type IV collagen. The polypeptide is Collagen alpha-1(VII) chain (COL7A1) (Homo sapiens (Human)).